We begin with the raw amino-acid sequence, 279 residues long: Bifunctional protein FolD (279 aa).

Residues 162–164, Ser-187, and Ile-228 contribute to the NADP(+) site; that span reads GRS.

The protein belongs to the tetrahydrofolate dehydrogenase/cyclohydrolase family. In terms of assembly, homodimer.

The catalysed reaction is (6R)-5,10-methylene-5,6,7,8-tetrahydrofolate + NADP(+) = (6R)-5,10-methenyltetrahydrofolate + NADPH. The enzyme catalyses (6R)-5,10-methenyltetrahydrofolate + H2O = (6R)-10-formyltetrahydrofolate + H(+). It participates in one-carbon metabolism; tetrahydrofolate interconversion. Functionally, catalyzes the oxidation of 5,10-methylenetetrahydrofolate to 5,10-methenyltetrahydrofolate and then the hydrolysis of 5,10-methenyltetrahydrofolate to 10-formyltetrahydrofolate. This Acidiphilium cryptum (strain JF-5) protein is Bifunctional protein FolD.